The sequence spans 223 residues: Sigma non-opioid intracellular receptor 1 (223 aa).

Topologically, residues 1 to 9 (MQWAAGRRW) are lumenal. The segment at 2–8 (QWAAGRR) is targeting to endoplasmic reticulum-associated lipid droplets. Residues 10-30 (AWITLFLTIVAVLIQAVWLWL) form a helical membrane-spanning segment. The Cytoplasmic segment spans residues 31–223 (GTQSFVFQRE…LTTYLFGQDS (193 aa)). An important for ligand-binding region spans residues 99-106 (SLSEYVLL). A C-terminal hydrophobic region region spans residues 177–223 (VIPSTLAFALSDTIFSTQDFLTLFYTLRAYARGLRLELTTYLFGQDS).

Belongs to the ERG2 family. As to quaternary structure, homotrimer. Forms a ternary complex with ANK2 and ITPR3. The complex is disrupted by agonists. Interacts with KCNA4. Interacts with KCNA2; cocaine consumption leads to increased interaction. Interacts with RNF112 in an oxidative stress-regulated manner.

The protein resides in the nucleus inner membrane. It is found in the nucleus outer membrane. It localises to the nucleus envelope. Its subcellular location is the cytoplasmic vesicle. The protein localises to the endoplasmic reticulum membrane. The protein resides in the membrane. It is found in the lipid droplet. It localises to the cell junction. Its subcellular location is the cell membrane. The protein localises to the cell projection. The protein resides in the growth cone. It is found in the postsynaptic density membrane. In terms of biological role, functions in lipid transport from the endoplasmic reticulum and is involved in a wide array of cellular functions probably through regulation of the biogenesis of lipid microdomains at the plasma membrane. Involved in the regulation of different receptors it plays a role in BDNF signaling and EGF signaling. Also regulates ion channels like the potassium channel and could modulate neurotransmitter release. Plays a role in calcium signaling through modulation together with ANK2 of the ITP3R-dependent calcium efflux at the endoplasmic reticulum. Plays a role in several other cell functions including proliferation, survival and death. Originally identified for its ability to bind various psychoactive drugs it is involved in learning processes, memory and mood alteration. Necessary for proper mitochondrial axonal transport in motor neurons, in particular the retrograde movement of mitochondria. Plays a role in protecting cells against oxidative stress-induced cell death via its interaction with RNF112. In Trichosurus vulpecula (Brush-tailed possum), this protein is Sigma non-opioid intracellular receptor 1 (SIGMAR1).